A 1786-amino-acid chain; its full sequence is Laminin subunit beta-1 (1786 aa).

An N-terminal signal peptide occupies residues 1–21; that stretch reads MGLLQVFAFGVLALWGTRVCA. A Laminin N-terminal domain is found at 31–270; the sequence is AEGSCYPATG…AVYDMVVRGN (240 aa). A glycan (N-linked (GlcNAc...) asparagine) is linked at asparagine 120. Serine 250 carries the phosphoserine modification. Disulfide bonds link cysteine 271/cysteine 280, cysteine 273/cysteine 298, cysteine 300/cysteine 309, cysteine 312/cysteine 332, cysteine 335/cysteine 344, cysteine 337/cysteine 362, cysteine 365/cysteine 374, cysteine 377/cysteine 395, cysteine 398/cysteine 411, cysteine 400/cysteine 426, cysteine 428/cysteine 437, cysteine 440/cysteine 455, cysteine 458/cysteine 472, cysteine 460/cysteine 479, cysteine 481/cysteine 490, cysteine 493/cysteine 507, cysteine 510/cysteine 522, cysteine 512/cysteine 529, and cysteine 531/cysteine 540. 4 Laminin EGF-like domains span residues 271 to 334, 335 to 397, 398 to 457, and 458 to 509; these read CFCY…ACKK, CNCN…LCEP, CTCD…GCKS, and CACN…GCRP. N-linked (GlcNAc...) asparagine glycosylation is present at asparagine 356. Residues 510 to 540 enclose the Laminin EGF-like 5; truncated domain; that stretch reads CDCDLGGALNNSCSEDSGQCSCLPHMIGRQC. Asparagine 519 is a glycosylation site (N-linked (GlcNAc...) asparagine). A Laminin IV type B domain is found at 549-767; the sequence is FTTLDHYIYE…IIFSISALIH (219 aa). N-linked (GlcNAc...) asparagine glycosylation occurs at asparagine 677. Disulfide bonds link cysteine 773/cysteine 785, cysteine 775/cysteine 792, cysteine 794/cysteine 803, cysteine 806/cysteine 818, cysteine 821/cysteine 833, cysteine 823/cysteine 840, cysteine 842/cysteine 851, cysteine 854/cysteine 864, cysteine 867/cysteine 876, cysteine 869/cysteine 883, cysteine 886/cysteine 895, cysteine 898/cysteine 914, cysteine 917/cysteine 933, cysteine 919/cysteine 944, cysteine 946/cysteine 955, cysteine 958/cysteine 973, cysteine 976/cysteine 990, cysteine 978/cysteine 997, cysteine 1000/cysteine 1009, cysteine 1012/cysteine 1025, cysteine 1028/cysteine 1040, cysteine 1030/cysteine 1054, cysteine 1056/cysteine 1065, cysteine 1068/cysteine 1081, cysteine 1084/cysteine 1096, cysteine 1086/cysteine 1103, cysteine 1105/cysteine 1114, cysteine 1117/cysteine 1129, cysteine 1132/cysteine 1144, cysteine 1134/cysteine 1151, cysteine 1153/cysteine 1162, and cysteine 1165/cysteine 1176. 8 consecutive Laminin EGF-like domains span residues 773–820, 821–866, 867–916, 917–975, 976–1027, 1028–1083, 1084–1131, and 1132–1178; these read CECD…GCKP, CDCH…SCQP, CQCN…HCRP, CPCP…SCQP, CQCH…DCRK, CVCN…GCGP, CNCN…ECRA, and CDCD…DCTP. Asparagine 1041 carries N-linked (GlcNAc...) asparagine glycosylation. Residues 1179–1397 are domain II; it reads CHQCFALWDA…LDLSAVAQMT (219 aa). Residues asparagine 1195, asparagine 1279, asparagine 1336, and asparagine 1343 are each glycosylated (N-linked (GlcNAc...) asparagine). Residues 1216-1315 are a coiled coil; the sequence is YRETVDSVEK…LEFIKNSDIQ (100 aa). Residues 1368 to 1388 are a coiled coil; that stretch reads KEQQEEQARLLDELAGKLQSL. A domain alpha region spans residues 1398 to 1430; it reads CGTPPGADCSESECGGPNCRTDEGEKKCGGPGC. Residues 1431–1786 form a domain I region; it reads GGLVTVAHSA…EKVAVYSTCL (356 aa). Positions 1448 to 1778 form a coiled coil; it reads DRDVLSALAE…RSLLKDISEK (331 aa). N-linked (GlcNAc...) asparagine glycosylation is present at asparagine 1487. Position 1496 is a phosphoserine (serine 1496). N-linked (GlcNAc...) asparagine glycans are attached at residues asparagine 1542 and asparagine 1643. The residue at position 1666 (serine 1666) is a Phosphoserine.

Laminin is a complex glycoprotein, consisting of three different polypeptide chains (alpha, beta, gamma), which are bound to each other by disulfide bonds into a cross-shaped molecule comprising one long and three short arms with globules at each end. Beta-1 is a subunit of laminin-1 (laminin-111 or EHS laminin), laminin-2 (laminin-211 or merosin), laminin-6 (laminin-311 or K-laminin), laminin-8 (laminin-411), laminin-10 (laminin-511) and laminin-12 (laminin-213). Interacts with ITGB1. In terms of tissue distribution, widely expressed in the embryo. High levels are detected in the cerebellar basement membrane, at postnatal day 7.

It localises to the secreted. The protein resides in the extracellular space. It is found in the extracellular matrix. The protein localises to the basement membrane. Its function is as follows. Binding to cells via a high affinity receptor, laminin is thought to mediate the attachment, migration and organization of cells into tissues during embryonic development by interacting with other extracellular matrix components. Involved in the organization of the laminar architecture of the cerebral cortex. It is probably required for the integrity of the basement membrane/glia limitans that serves as an anchor point for the endfeet of radial glial cells and as a physical barrier to migrating neurons. Radial glial cells play a central role in cerebral cortical development, where they act both as the proliferative unit of the cerebral cortex and a scaffold for neurons migrating toward the pial surface. The chain is Laminin subunit beta-1 (Lamb1) from Mus musculus (Mouse).